Consider the following 234-residue polypeptide: Preflagellin peptidase (234 aa).

Residue Met-1 is a topological domain, cytoplasmic. Residues 2–18 (INFIVGAIGLLIASIYD) form a helical membrane-spanning segment. Topologically, residues 19 to 23 (LKSRE) are extracellular. The chain crosses the membrane as a helical span at residues 24–46 (IEDYVWVSMVIFGLIYNGYLSFI). Residues 47 to 49 (SHD) lie on the Cytoplasmic side of the membrane. A helical transmembrane segment spans residues 50 to 72 (MLYVIQSIVGFIVCFFLGFFMFL). At 73-78 (LGVGGG) the chain is on the extracellular side. Residues 79-89 (DGKLIMGLGAL) form a helical membrane-spanning segment. Residues 90–110 (IPKYNMPIHTPLGAILNYLYL) lie on the Cytoplasmic side of the membrane. Residues 111–139 (PSFPIMVVINAMFFSITLPIIIFLRNVIR) traverse the membrane as a helical segment. At 140–205 (GVKPKTKKEV…EEIWVTPAIP (66 aa)) the chain is on the extracellular side. The chain crosses the membrane as a helical span at residues 206-217 (FVVPIFLSYLLT). The Cytoplasmic segment spans residues 218–234 (SIIGDKIIGIFLSVFGL).

It belongs to the peptidase A24 family. Archaeal preflagellin peptidase subfamily.

The protein resides in the cell membrane. It catalyses the reaction Cleaves the signal peptide of 3 to 12 amino acids from the N-terminal of preflagellin, usually at Arg-Gly-|- or Lys-Gly-|-, to release flagellin.. Functionally, cleaves the N-terminal leader peptide from preflagellins. The protein is Preflagellin peptidase (flaK) of Methanocaldococcus jannaschii (strain ATCC 43067 / DSM 2661 / JAL-1 / JCM 10045 / NBRC 100440) (Methanococcus jannaschii).